The sequence spans 72 residues: MTTKTTDETFTVDCPICKKAVIWSPQSPYRPFCSKRCQLIDLGEWAAEEKAIPCENADFAMDPENNEDWAKH.

Residues C14, C17, C33, and C37 each coordinate Zn(2+).

This sequence belongs to the DNA gyrase inhibitor YacG family. Interacts with GyrB. Zn(2+) is required as a cofactor.

Inhibits all the catalytic activities of DNA gyrase by preventing its interaction with DNA. Acts by binding directly to the C-terminal domain of GyrB, which probably disrupts DNA binding by the gyrase. The protein is DNA gyrase inhibitor YacG of Mannheimia succiniciproducens (strain KCTC 0769BP / MBEL55E).